The chain runs to 301 residues: Ornithine carbamoyltransferase (301 aa).

Residues arginine 100 and 127 to 130 each bind carbamoyl phosphate; that span reads HPCQ. L-ornithine contacts are provided by residues asparagine 158, aspartate 221, and 225–226; that span reads SM. 2 residues coordinate carbamoyl phosphate: cysteine 260 and arginine 288.

The protein belongs to the aspartate/ornithine carbamoyltransferase superfamily. OTCase family. As to quaternary structure, homododecamer.

It localises to the cytoplasm. The catalysed reaction is carbamoyl phosphate + L-ornithine = L-citrulline + phosphate + H(+). It participates in amino-acid biosynthesis; L-arginine biosynthesis; L-arginine from L-ornithine and carbamoyl phosphate: step 1/3. In terms of biological role, reversibly catalyzes the transfer of the carbamoyl group from carbamoyl phosphate (CP) to the N(epsilon) atom of ornithine (ORN) to produce L-citrulline. The polypeptide is Ornithine carbamoyltransferase (argF) (Moritella profunda).